The chain runs to 38 residues: Large ribosomal subunit protein bL36 (38 aa).

Belongs to the bacterial ribosomal protein bL36 family.

The protein is Large ribosomal subunit protein bL36 of Pseudoalteromonas atlantica (strain T6c / ATCC BAA-1087).